The primary structure comprises 496 residues: MDLLYIVAALVIFASLLIAKSKRKPKKNLPPGPPRLPIIGNLHQLGEKPHRAMVELSKTYGPLMSLKLGSVTTVVATSVETVRDVLKTYDLECCSRPYMTYPARITYNLKDLVFSPYDKYWRQVRKLTVVELYTAKRVQSFRHIREEEVASFVRFNKQAASSEETVNLSQKILKMSGSVICRIGFGINLEGSKLENTYQEIIVQAFEVLGSLAAVDYFPVIGTIIDRITGLHAKCEKVFHGIDSFFDQAIQRHIDDPSIKDDIIDLLLKMERGEGSLGEYELTREHTKGILMNILTAGIDTSAQTMTWAMTHLLANPRVMKKLQAEIREKIKNIDEITDDDVEQLDYFKLVLKETFRISPIVPVLVPRVAAKDLKIAGYDVPEKTWIHVNMWAVHMSPSIWKDPETFNPERFIDNQTDFKGLNFELLPFGSGRRMCPGMGMGLAVVHLTLINLLYRFDWKLPNGMKAEELSIEENYGLICVKKLPLEAIPVLTQWT.

Residue C436 coordinates heme.

It belongs to the cytochrome P450 family. Heme is required as a cofactor.

This chain is Cytochrome P450 71B1 (CYP71B1), found in Thlaspi arvense (Field penny-cress).